A 342-amino-acid chain; its full sequence is MEKLTITRPDDWHLHLRDGAALKAVLPHTVRQFARAIVMPNLKPPVRSVADAAAYRERILAAIPAGGQFEPLMTLYLTDNTNPEEIIAAKASQFVKAVKYYPAGATTNSDFGVTDIHRCDAVLAAMEQVDLPLLLHGEVTDSNIDIFDREKVFIEKYLIPLREKFPRLRVVLEHITTSDAVQFVLSANNIAATITPQHLLFSRNALFKGGICPHFYCLPILKREEHRLSLLHAATSGNPKFFLGTDSAPHARNSKESLCGCAGCYSALHAMELYAEAFESVNSLDKLEAFASFYGPDFYQLPRNTAQITLMKNPWRIPAELPFPESGLVPLRAGEEITWQMV.

Residues His13 and His15 each contribute to the Zn(2+) site. Substrate contacts are provided by residues 15–17 (HLR) and Asn41. Residues Lys99, His136, and His174 each contribute to the Zn(2+) site. The residue at position 99 (Lys99) is an N6-carboxylysine. His136 is a binding site for substrate. Residue Leu218 participates in substrate binding. Asp246 serves as a coordination point for Zn(2+). The active site involves Asp246. 2 residues coordinate substrate: His250 and Ala262.

This sequence belongs to the metallo-dependent hydrolases superfamily. DHOase family. Class II DHOase subfamily. As to quaternary structure, homodimer. Requires Zn(2+) as cofactor.

It catalyses the reaction (S)-dihydroorotate + H2O = N-carbamoyl-L-aspartate + H(+). It functions in the pathway pyrimidine metabolism; UMP biosynthesis via de novo pathway; (S)-dihydroorotate from bicarbonate: step 3/3. Its function is as follows. Catalyzes the reversible cyclization of carbamoyl aspartate to dihydroorotate. The chain is Dihydroorotase from Synechocystis sp. (strain ATCC 27184 / PCC 6803 / Kazusa).